Reading from the N-terminus, the 92-residue chain is Acylphosphatase (92 aa).

One can recognise an Acylphosphatase-like domain in the interval 6–92 (RAHVYVSGRV…EGVDGFEIRR (87 aa)). Active-site residues include R21 and N39.

This sequence belongs to the acylphosphatase family.

It carries out the reaction an acyl phosphate + H2O = a carboxylate + phosphate + H(+). The sequence is that of Acylphosphatase (acyP) from Natronomonas pharaonis (strain ATCC 35678 / DSM 2160 / CIP 103997 / JCM 8858 / NBRC 14720 / NCIMB 2260 / Gabara) (Halobacterium pharaonis).